Consider the following 729-residue polypeptide: Polyribonucleotide nucleotidyltransferase (729 aa).

Positions 485 and 491 each coordinate Mg(2+). The KH domain occupies 552-611; the sequence is PRITTMKVAEDKIRTIIGKGGATIKGLIESTGVSIDIDDSGVIQLFSPDKMALEEAQKQI. One can recognise an S1 motif domain in the interval 621-689; the sequence is GQTYQGKVSK…KQGRVKLEWK (69 aa). Residues 710–729 are disordered; it reads TMEEQSEEINSGNKISEEEE.

Belongs to the polyribonucleotide nucleotidyltransferase family. Component of the RNA degradosome, which is a multiprotein complex involved in RNA processing and mRNA degradation. Requires Mg(2+) as cofactor.

The protein localises to the cytoplasm. It carries out the reaction RNA(n+1) + phosphate = RNA(n) + a ribonucleoside 5'-diphosphate. Its function is as follows. Involved in mRNA degradation. Catalyzes the phosphorolysis of single-stranded polyribonucleotides processively in the 3'- to 5'-direction. In Legionella pneumophila (strain Paris), this protein is Polyribonucleotide nucleotidyltransferase.